The following is a 205-amino-acid chain: Dephospho-CoA kinase (205 aa).

Residues 15 to 205 enclose the DPCK domain; it reads VIGLTGGIAT…VERALDQASI (191 aa). 23–28 contacts ATP; that stretch reads ATGKST.

Belongs to the CoaE family.

It localises to the cytoplasm. The catalysed reaction is 3'-dephospho-CoA + ATP = ADP + CoA + H(+). It functions in the pathway cofactor biosynthesis; coenzyme A biosynthesis; CoA from (R)-pantothenate: step 5/5. Functionally, catalyzes the phosphorylation of the 3'-hydroxyl group of dephosphocoenzyme A to form coenzyme A. The sequence is that of Dephospho-CoA kinase from Gloeobacter violaceus (strain ATCC 29082 / PCC 7421).